A 400-amino-acid chain; its full sequence is Argininosuccinate synthase (400 aa).

Residues 9 to 17 (AYSGGVDTS) and alanine 37 contribute to the ATP site. Tyrosine 88 is an L-citrulline binding site. Glycine 118 is a binding site for ATP. The L-aspartate site is built by threonine 120, asparagine 124, and aspartate 125. Asparagine 124 is a binding site for L-citrulline. 5 residues coordinate L-citrulline: arginine 128, serine 176, serine 185, glutamate 261, and tyrosine 273.

Belongs to the argininosuccinate synthase family. Type 1 subfamily. Homotetramer.

The protein resides in the cytoplasm. The catalysed reaction is L-citrulline + L-aspartate + ATP = 2-(N(omega)-L-arginino)succinate + AMP + diphosphate + H(+). It participates in amino-acid biosynthesis; L-arginine biosynthesis; L-arginine from L-ornithine and carbamoyl phosphate: step 2/3. The protein is Argininosuccinate synthase of Prochlorococcus marinus (strain MIT 9211).